A 113-amino-acid chain; its full sequence is Endoribonuclease SymE (113 aa).

Residues 29–74 (GRYPDYSRIPAITLKGQWLEVAGFATGTAVDVKVMEGCIVLTAQPP) form the SpoVT-AbrB domain.

The protein belongs to the SymE family.

The protein resides in the cytoplasm. Its function is as follows. Involved in the degradation and recycling of damaged RNA. It is itself a target for degradation by the ATP-dependent protease Lon. The protein is Endoribonuclease SymE of Escherichia coli O7:K1 (strain IAI39 / ExPEC).